The primary structure comprises 1669 residues: Dystrophin, isoform B (1669 aa).

Pro residues predominate over residues 1–11; sequence MTAKPPPPIPP. 5 disordered regions span residues 1-28, 43-243, 327-356, 389-417, and 481-508; these read MTAK…LAPE, RGQQ…SEDA, RAQA…RSTI, GGGG…MPLS, and SGAL…NSSG. Residues 53–62 are compositionally biased toward polar residues; it reads SQEQHATNTL. Residues 118-131 are compositionally biased toward pro residues; the sequence is GLPPTMRQPPPLPR. Positions 132–147 are enriched in low complexity; the sequence is KPASTQSSAQNSAQSS. Positions 153 to 166 are enriched in basic and acidic residues; it reads KFKDKPPPPPEKHS. Low complexity-rich tracts occupy residues 328 to 347 and 396 to 405; these read AQAQ…SNSQ and STGNAVANSG. Residues 485–500 show a composition bias toward basic and acidic residues; sequence SREELRMRRRSSHDET. Spectrin repeat units lie at residues 541-643, 650-747, 754-883, and 890-990; these read QRFE…KQLH, QSFD…NRLE, NALL…HRLD, and RQFQ…KVLC. A disordered region spans residues 827–851; it reads VSDTSDTEANHDSDSRYMSAEEQSR. The tract at residues 994-1024 is disordered; the sequence is AQQTHENGDDGRTTSNSGTIGPLPNLGQSVK. In terms of domain architecture, WW spans 1021-1054; sequence QSVKPPWERATTAANVPYYIDHERETTHWDHPEM. The ZZ-type zinc finger occupies 1279-1335; it reads KHQAKCNICKEYPIVGFRYRCLKCFNFDMCQKCFFFGRNAKNHKLTHPMHEYCTTTT. Zn(2+) is bound by residues Cys1284, Cys1287, Cys1299, Cys1302, Cys1308, Cys1311, His1321, and His1325. Ser1379 bears the Phosphoserine mark. Disordered stretches follow at residues 1488 to 1516 and 1559 to 1669; these read EQSG…GEQG and DEPN…ELQK. 2 stretches are compositionally biased toward polar residues: residues 1497 to 1509 and 1580 to 1611; these read NGMQ…MTGL and ALNS…QQNG. Residues 1630–1641 show a composition bias toward acidic residues; it reads QELESINDDLED. Over residues 1642-1660 the composition is skewed to low complexity; sequence SSSSNTTNTTTTTTTTATT.

In terms of assembly, component of the dystrophin associated protein complex (DAPC). Interacts with Dg, via the Dg WW domain binding sites. In terms of tissue distribution, expressed in neuronally derived tissues, mainly the CNS and the brain of stage 16 embryos. Lower level expression is seen in the sensory organs. Expression is absent from the musculature. In larvae, expression is predominant throughout the neuropil and brain and in the eye antennal disks.

It localises to the cell membrane. Its subcellular location is the sarcolemma. The protein resides in the cytoplasm. The protein localises to the cytoskeleton. Required for the maintenance of appropriate synaptic retrograde communication and the stabilization of muscle cell architecture or physiology. May play a role in anchoring the cytoskeleton to the plasma membrane. In Drosophila melanogaster (Fruit fly), this protein is Dystrophin, isoform B (Dys).